A 307-amino-acid chain; its full sequence is Regulating synaptic membrane exocytosis protein 3 (307 aa).

Positions 86 to 120 (STETGIAVEMRSRVTRQGSRESTDGSTNSNSSEGT) are disordered. A compositionally biased stretch (polar residues) spans 109–119 (DGSTNSNSSEG). Positions 155 to 273 (PMGDVHIAIM…DLSAAVTGWY (119 aa)) constitute a C2 domain. A phosphoserine mark is found at S294 and S297.

Binds PPFIA3. Does not bind RAB3.

It is found in the synapse. Regulates synaptic membrane exocytosis. This is Regulating synaptic membrane exocytosis protein 3 (Rims3) from Mus musculus (Mouse).